We begin with the raw amino-acid sequence, 55 residues long: MYNAPPPQDMSYYDHCQRRHEEKGCLYACIFTALCCFCCYETCECCLDCLCCCCN.

The chain crosses the membrane as a helical span at residues 24 to 40 (GCLYACIFTALCCFCCY).

Belongs to the CYSTM1 family.

The protein resides in the cell membrane. It localises to the secreted. It is found in the cell wall. Functionally, confers resistance to heavy metal ions (e.g. cadmium (CdCl(2)) and copper (CuCl(2))) by chelating them at the plasma membrane of root cells, thus stopping their entry and reducing their accumulation. The polypeptide is Protein CADMIUM TOLERANCE 1 (Echinochloa crus-galli subsp. caudata (Cockspur)).